Consider the following 318-residue polypeptide: Deoxyhypusine hydroxylase (318 aa).

HEAT-like PBS-type repeat units follow at residues 70 to 96 (LKHEVAYVLGQTKDLYAAPYLREVLEN) and 103 to 129 (VRHEAAEALGALGDKESLPLLEKYFKE). Residues H72, E73, H105, E106, H231, E232, H264, and E265 each contribute to the Fe cation site. The stretch at 262–288 (VRHEAAEALGSIATDECLPVLQSFLND) is one HEAT-like PBS-type 3 repeat.

Belongs to the deoxyhypusine hydroxylase family. Fe(2+) is required as a cofactor.

The protein resides in the cytoplasm. The protein localises to the nucleus. It catalyses the reaction [eIF5A protein]-deoxyhypusine + AH2 + O2 = [eIF5A protein]-hypusine + A + H2O. It functions in the pathway protein modification; eIF5A hypusination. Functionally, catalyzes the hydroxylation of the N(6)-(4-aminobutyl)-L-lysine intermediate to form hypusine, an essential post-translational modification only found in mature eIF-5A factor. In Candida albicans (strain SC5314 / ATCC MYA-2876) (Yeast), this protein is Deoxyhypusine hydroxylase.